The sequence spans 274 residues: Rhamnulose-1-phosphate aldolase (274 aa).

The active site involves Glu117. Zn(2+) contacts are provided by His141, His143, and His212.

This sequence belongs to the aldolase class II family. RhaD subfamily. As to quaternary structure, homotetramer. The cofactor is Zn(2+).

It is found in the cytoplasm. It carries out the reaction L-rhamnulose 1-phosphate = (S)-lactaldehyde + dihydroxyacetone phosphate. It participates in carbohydrate degradation; L-rhamnose degradation; glycerone phosphate from L-rhamnose: step 3/3. In terms of biological role, catalyzes the reversible cleavage of L-rhamnulose-1-phosphate to dihydroxyacetone phosphate (DHAP) and L-lactaldehyde. This is Rhamnulose-1-phosphate aldolase from Escherichia coli (strain K12 / MC4100 / BW2952).